Consider the following 764-residue polypeptide: Molybdenum cofactor sulfurase 1 (764 aa).

Lys-228 is modified (N6-(pyridoxal phosphate)lysine). Cys-394 is a catalytic residue. The region spanning 607–762 (LRLLKQSDEE…LYCNSVVEGL (156 aa)) is the MOSC domain.

The protein belongs to the class-V pyridoxal-phosphate-dependent aminotransferase family. MOCOS subfamily. Requires pyridoxal 5'-phosphate as cofactor.

It catalyses the reaction Mo-molybdopterin + L-cysteine + AH2 = thio-Mo-molybdopterin + L-alanine + A + H2O. Functionally, sulfurates the molybdenum cofactor. Sulfation of molybdenum is essential for xanthine dehydrogenase (XDH) and aldehyde oxidase (ADO) enzymes in which molybdenum cofactor is liganded by 1 oxygen and 1 sulfur atom in active form. This is Molybdenum cofactor sulfurase 1 from Aedes aegypti (Yellowfever mosquito).